A 346-amino-acid chain; its full sequence is UDP-N-acetylenolpyruvoylglucosamine reductase (346 aa).

The region spanning 18–189 (LRAQARAFIA…VSVVFALKTH (172 aa)) is the FAD-binding PCMH-type domain. R165 is an active-site residue. S240 (proton donor) is an active-site residue. Residue E336 is part of the active site.

The protein belongs to the MurB family. FAD is required as a cofactor.

It localises to the cytoplasm. The enzyme catalyses UDP-N-acetyl-alpha-D-muramate + NADP(+) = UDP-N-acetyl-3-O-(1-carboxyvinyl)-alpha-D-glucosamine + NADPH + H(+). It participates in cell wall biogenesis; peptidoglycan biosynthesis. Its function is as follows. Cell wall formation. The protein is UDP-N-acetylenolpyruvoylglucosamine reductase of Neisseria meningitidis serogroup B (strain ATCC BAA-335 / MC58).